The sequence spans 479 residues: Ribulose bisphosphate carboxylase large chain (479 aa).

The propeptide occupies 1–2; the sequence is MS. 2 residues coordinate substrate: Asn123 and Thr173. Residue Lys175 is the Proton acceptor of the active site. Residue Lys177 coordinates substrate. Residues Lys201, Asp203, and Glu204 each contribute to the Mg(2+) site. Residue Lys201 is modified to N6-carboxylysine. Ser208 carries the post-translational modification Phosphoserine. The active-site Proton acceptor is His294. 2 residues coordinate substrate: Arg295 and His327. The residue at position 330 (Thr330) is a Phosphothreonine. Residue Ser379 coordinates substrate.

The protein belongs to the RuBisCO large chain family. Type I subfamily. As to quaternary structure, heterohexadecamer of 8 large chains and 8 small chains; disulfide-linked. The disulfide link is formed within the large subunit homodimers. Requires Mg(2+) as cofactor. Post-translationally, the disulfide bond which can form in the large chain dimeric partners within the hexadecamer appears to be associated with oxidative stress and protein turnover.

Its subcellular location is the plastid. The protein localises to the chloroplast. It carries out the reaction 2 (2R)-3-phosphoglycerate + 2 H(+) = D-ribulose 1,5-bisphosphate + CO2 + H2O. The enzyme catalyses D-ribulose 1,5-bisphosphate + O2 = 2-phosphoglycolate + (2R)-3-phosphoglycerate + 2 H(+). Its function is as follows. RuBisCO catalyzes two reactions: the carboxylation of D-ribulose 1,5-bisphosphate, the primary event in carbon dioxide fixation, as well as the oxidative fragmentation of the pentose substrate in the photorespiration process. Both reactions occur simultaneously and in competition at the same active site. The sequence is that of Ribulose bisphosphate carboxylase large chain from Brassica oleracea (Wild cabbage).